Consider the following 312-residue polypeptide: Serine/threonine-protein phosphatase PP2A catalytic subunit (312 aa).

The Mn(2+) site is built by Asp-60, His-62, Asp-88, and Asn-120. The Proton donor role is filled by His-121. 2 residues coordinate Mn(2+): His-170 and His-244.

It belongs to the PPP phosphatase family. PP-2A subfamily. Mn(2+) is required as a cofactor.

The protein resides in the cytoplasm. The enzyme catalyses O-phospho-L-seryl-[protein] + H2O = L-seryl-[protein] + phosphate. It carries out the reaction O-phospho-L-threonyl-[protein] + H2O = L-threonyl-[protein] + phosphate. The polypeptide is Serine/threonine-protein phosphatase PP2A catalytic subunit (Nicotiana tabacum (Common tobacco)).